The chain runs to 862 residues: Mismatch repair endonuclease PMS2 (862 aa).

Positions 45, 70, 109, 110, and 111 each coordinate ATP. Basic and acidic residues-rich tracts occupy residues 391 to 401, 408 to 444, 484 to 495, and 528 to 552; these read DLEKPMVEKQD, TGEE…EPRR, PTDRAEVEKDSG, and GSQE…VDCH. Residues 391–552 form a disordered region; that stretch reads DLEKPMVEKQ…DDSFSDVDCH (162 aa). At T573 the chain carries Phosphothreonine. A Nuclear localization signal motif is present at residues 577-580; that stretch reads KRFK. The residue at position 597 (T597) is a Phosphothreonine.

Belongs to the DNA mismatch repair MutL/HexB family. Heterodimer of PMS2 and MLH1 (MutL alpha); this interaction is required for the stability of both partners. Forms a ternary complex with MutS alpha (MSH2-MSH6) or MutS beta (MSH2-MSH3). Part of the BRCA1-associated genome surveillance complex (BASC), which contains BRCA1, MSH2, MSH6, MLH1, ATM, BLM, PMS2 and the RAD50-MRE11-NBS1 protein complex. This association could be a dynamic process changing throughout the cell cycle and within subnuclear domains. Interacts with MTMR15/FAN1.

It is found in the nucleus. It carries out the reaction ATP + H2O = ADP + phosphate + H(+). Component of the post-replicative DNA mismatch repair system (MMR). Heterodimerizes with MLH1 to form MutL alpha. DNA repair is initiated by MutS alpha (MSH2-MSH6) or MutS beta (MSH2-MSH3) binding to a dsDNA mismatch, then MutL alpha is recruited to the heteroduplex. Assembly of the MutL-MutS-heteroduplex ternary complex in presence of RFC and PCNA is sufficient to activate endonuclease activity of PMS2. It introduces single-strand breaks near the mismatch and thus generates new entry points for the exonuclease EXO1 to degrade the strand containing the mismatch. DNA methylation would prevent cleavage and therefore assure that only the newly mutated DNA strand is going to be corrected. MutL alpha (MLH1-PMS2) interacts physically with the clamp loader subunits of DNA polymerase III, suggesting that it may play a role to recruit the DNA polymerase III to the site of the MMR. Also implicated in DNA damage signaling, a process which induces cell cycle arrest and can lead to apoptosis in case of major DNA damages. Possesses an ATPase activity, but in the absence of gross structural changes, ATP hydrolysis may not be necessary for proficient mismatch repair. The protein is Mismatch repair endonuclease PMS2 of Homo sapiens (Human).